We begin with the raw amino-acid sequence, 492 residues long: Phosphatidylglycerol--prolipoprotein diacylglyceryl transferase (492 aa).

The next 9 membrane-spanning stretches (helical) occupy residues 40 to 60 (IFGI…YVGW), 72 to 92 (AIRQ…VVVP), 106 to 126 (VAVR…VGLA), 133 to 153 (AGLG…GGLL), 184 to 204 (QGGL…LIAL), 214 to 234 (IGDV…LGCL), 361 to 381 (VWGT…VLLI), 409 to 429 (GVLM…LEWI), and 441 to 461 (LSIS…TLFI). Residue R230 coordinates a 1,2-diacyl-sn-glycero-3-phospho-(1'-sn-glycerol).

The protein belongs to the Lgt family.

It is found in the cell inner membrane. The catalysed reaction is L-cysteinyl-[prolipoprotein] + a 1,2-diacyl-sn-glycero-3-phospho-(1'-sn-glycerol) = an S-1,2-diacyl-sn-glyceryl-L-cysteinyl-[prolipoprotein] + sn-glycerol 1-phosphate + H(+). Its pathway is protein modification; lipoprotein biosynthesis (diacylglyceryl transfer). In terms of biological role, catalyzes the transfer of the diacylglyceryl group from phosphatidylglycerol to the sulfhydryl group of the N-terminal cysteine of a prolipoprotein, the first step in the formation of mature lipoproteins. The polypeptide is Phosphatidylglycerol--prolipoprotein diacylglyceryl transferase (Rhodopirellula baltica (strain DSM 10527 / NCIMB 13988 / SH1)).